The following is a 582-amino-acid chain: Actin-histidine N-methyltransferase (582 aa).

S-adenosyl-L-methionine is bound by residues arginine 75, 104–106, arginine 254, 275–279, and 325–327; these read EGF, DMCNH, and NGF. The region spanning 94-314 is the SET domain; it reads DGFELVEFPE…SGEQIYIFYG (221 aa). Positions 550–582 are disordered; sequence DKDLLPNGTKSENDSFLAEDNQQETGNAKDFCS.

It belongs to the class V-like SAM-binding methyltransferase superfamily. SETD3 actin-histidine methyltransferase family.

The protein resides in the cytoplasm. The enzyme catalyses L-histidyl-[protein] + S-adenosyl-L-methionine = N(tele)-methyl-L-histidyl-[protein] + S-adenosyl-L-homocysteine + H(+). In terms of biological role, protein-histidine N-methyltransferase that specifically mediates 3-methylhistidine (tele-methylhistidine) methylation of actin at 'His-73'. Does not have protein-lysine N-methyltransferase activity and probably only catalyzes histidine methylation of actin. This chain is Actin-histidine N-methyltransferase, found in Xenopus tropicalis (Western clawed frog).